Consider the following 34-residue polypeptide: Photosystem II reaction center protein M (34 aa).

A helical membrane pass occupies residues 5–25 (ILAFIATALFISIPTAFLLIP).

The protein belongs to the PsbM family. As to quaternary structure, PSII is composed of 1 copy each of membrane proteins PsbA, PsbB, PsbC, PsbD, PsbE, PsbF, PsbH, PsbI, PsbJ, PsbK, PsbL, PsbM, PsbT, PsbX, PsbY, PsbZ, Psb30/Ycf12, at least 3 peripheral proteins of the oxygen-evolving complex and a large number of cofactors. It forms dimeric complexes.

It is found in the plastid. Its subcellular location is the chloroplast thylakoid membrane. One of the components of the core complex of photosystem II (PSII). PSII is a light-driven water:plastoquinone oxidoreductase that uses light energy to abstract electrons from H(2)O, generating O(2) and a proton gradient subsequently used for ATP formation. It consists of a core antenna complex that captures photons, and an electron transfer chain that converts photonic excitation into a charge separation. This subunit is found at the monomer-monomer interface. The protein is Photosystem II reaction center protein M of Psilotum nudum (Whisk fern).